We begin with the raw amino-acid sequence, 419 residues long: Alpha-galactosidase A (419 aa).

The N-terminal stretch at 1–31 (MKLLSRDTRLVCELALCPLALVFWSILGVRA) is a signal peptide. 2 cysteine pairs are disulfide-bonded: C52–C94 and C56–C63. N139 carries an N-linked (GlcNAc...) asparagine glycan. The cysteines at positions 142 and 172 are disulfide-linked. The active-site Nucleophile is the D170. Y186 carries the post-translational modification Phosphotyrosine. N192 carries N-linked (GlcNAc...) asparagine glycosylation. A disulfide bridge connects residues C202 and C223. 203–207 (EWPLY) contributes to the substrate binding site. Residue N215 is glycosylated (N-linked (GlcNAc...) asparagine). D231 (proton donor) is an active-site residue. The cysteines at positions 378 and 382 are disulfide-linked.

Belongs to the glycosyl hydrolase 27 family. In terms of assembly, homodimer.

It localises to the lysosome. The catalysed reaction is Hydrolysis of terminal, non-reducing alpha-D-galactose residues in alpha-D-galactosides, including galactose oligosaccharides, galactomannans and galactolipids.. It catalyses the reaction a globoside Gb3Cer (d18:1(4E)) + H2O = a beta-D-Gal-(1-&gt;4)-beta-D-Glc-(1&lt;-&gt;1)-Cer(d18:1(4E)) + D-galactose. It carries out the reaction a globoside Gb3Cer + H2O = a beta-D-galactosyl-(1-&gt;4)-beta-D-glucosyl-(1&lt;-&gt;1)-ceramide + D-galactose. With respect to regulation, galactosylgalactosylglucosylceramidase activity is stimulated by saposin B and ammonium chloride. In terms of biological role, catalyzes the hydrolysis of glycosphingolipids and participates in their degradation in the lysosome. This Mus musculus (Mouse) protein is Alpha-galactosidase A.